Consider the following 154-residue polypeptide: Mitochondrial fission 1 protein (154 aa).

Residues 1–124 (MEDLLNEVVP…KEIDKEVAKG (124 aa)) are Cytoplasmic-facing. The helical transmembrane segment at 125–145 (MVVAGGAALVLGGILGLGIAM) threads the bilayer. The Mitochondrial intermembrane portion of the chain corresponds to 146 to 154 (ARNKQKREK).

This sequence belongs to the FIS1 family.

It is found in the mitochondrion outer membrane. Functionally, involved in the fragmentation of the mitochondrial network and its perinuclear clustering. Functions downstream of Pink1 and upstream of Drp1 to regulate mitochondrial fission. The chain is Mitochondrial fission 1 protein from Drosophila melanogaster (Fruit fly).